Reading from the N-terminus, the 567-residue chain is Proline--tRNA ligase (567 aa).

Belongs to the class-II aminoacyl-tRNA synthetase family. ProS type 1 subfamily. Homodimer.

Its subcellular location is the cytoplasm. The enzyme catalyses tRNA(Pro) + L-proline + ATP = L-prolyl-tRNA(Pro) + AMP + diphosphate. In terms of biological role, catalyzes the attachment of proline to tRNA(Pro) in a two-step reaction: proline is first activated by ATP to form Pro-AMP and then transferred to the acceptor end of tRNA(Pro). As ProRS can inadvertently accommodate and process non-cognate amino acids such as alanine and cysteine, to avoid such errors it has two additional distinct editing activities against alanine. One activity is designated as 'pretransfer' editing and involves the tRNA(Pro)-independent hydrolysis of activated Ala-AMP. The other activity is designated 'posttransfer' editing and involves deacylation of mischarged Ala-tRNA(Pro). The misacylated Cys-tRNA(Pro) is not edited by ProRS. The protein is Proline--tRNA ligase of Geobacillus thermodenitrificans (strain NG80-2).